Consider the following 254-residue polypeptide: Demethylmenaquinone methyltransferase (254 aa).

Residues threonine 62, aspartate 80, 122 to 123, and serine 139 contribute to the S-adenosyl-L-methionine site; that span reads DG.

Belongs to the class I-like SAM-binding methyltransferase superfamily. MenG/UbiE family.

It catalyses the reaction a 2-demethylmenaquinol + S-adenosyl-L-methionine = a menaquinol + S-adenosyl-L-homocysteine + H(+). It functions in the pathway quinol/quinone metabolism; menaquinone biosynthesis; menaquinol from 1,4-dihydroxy-2-naphthoate: step 2/2. Its function is as follows. Methyltransferase required for the conversion of demethylmenaquinol (DMKH2) to menaquinol (MKH2). The sequence is that of Demethylmenaquinone methyltransferase from Parafrankia sp. (strain EAN1pec).